A 263-amino-acid polypeptide reads, in one-letter code: Putative replication protein PDa0002 (263 aa).

The sequence is that of Putative replication protein PDa0002 from Xylella fastidiosa (strain Temecula1 / ATCC 700964).